A 1327-amino-acid polypeptide reads, in one-letter code: Kinectin (1327 aa).

Residues 1-8 (MELYESTY) are Cytoplasmic-facing. Residues 9 to 29 (FIVLIPSVVITVIFLFFWLFM) traverse the membrane as a helical; Signal-anchor for type II membrane protein segment. Residues 30–1327 (KETLYDEVLA…EVNQQLTKET (1298 aa)) are Lumenal-facing. Disordered stretches follow at residues 49–181 (STKT…EQDK) and 197–216 (LSHQ…GLSK). N69 carries an N-linked (GlcNAc...) asparagine glycan. Composition is skewed to basic and acidic residues over residues 73–86 (RESD…DFKL) and 111–135 (VRER…ESDA). A phosphoserine mark is found at S75 and S77. The span at 163–173 (LKKKAGQKKSK) shows a compositional bias: basic residues. A coiled-coil region spans residues 329–1327 (ELSGLLHQLQ…EVNQQLTKET (999 aa)). Residue N1031 is glycosylated (N-linked (GlcNAc...) asparagine). Position 1060 is a phosphoserine (S1060). Residue N1066 is glycosylated (N-linked (GlcNAc...) asparagine). A Phosphoserine modification is found at S1290.

It belongs to the kinectin family. As to expression, expressed in all tissues examined including 12-day embryo, adult heart, brain, ovary, kidney, lung, small intestine, spleen, thymus and pancreas.

The protein resides in the endoplasmic reticulum membrane. Its function is as follows. Receptor for kinesin thus involved in kinesin-driven vesicle motility. Accumulates in integrin-based adhesion complexes (IAC) upon integrin aggregation by fibronectin. In Mus musculus (Mouse), this protein is Kinectin.